Reading from the N-terminus, the 103-residue chain is Large ribosomal subunit protein bL21 (103 aa).

Belongs to the bacterial ribosomal protein bL21 family. In terms of assembly, part of the 50S ribosomal subunit. Contacts protein L20.

This protein binds to 23S rRNA in the presence of protein L20. This is Large ribosomal subunit protein bL21 from Shewanella sp. (strain ANA-3).